A 104-amino-acid polypeptide reads, in one-letter code: UPF0134 protein MPN_104 (104 aa).

The protein belongs to the UPF0134 family.

The sequence is that of UPF0134 protein MPN_104 from Mycoplasma pneumoniae (strain ATCC 29342 / M129 / Subtype 1) (Mycoplasmoides pneumoniae).